An 88-amino-acid chain; its full sequence is MQNDAGQTVELYVPRKCSSSNRIIGPKDHASVQIDFVDVDPETGRMIPGKSTRYAICGAIRRMGESDDAILRLAQKDGLVPRDDVKSN.

Belongs to the eukaryotic ribosomal protein eS21 family. In terms of assembly, component of the 40S small ribosomal subunit.

The protein localises to the cytoplasm. Its subcellular location is the cytosol. It is found in the rough endoplasmic reticulum. This chain is Small ribosomal subunit protein eS21 (rps-21), found in Caenorhabditis elegans.